Consider the following 479-residue polypeptide: Glutamate--tRNA ligase (479 aa).

The short motif at 9–19 (PSPTGLFHIGT) is the 'HIGH' region element. The 'KMSKS' region motif lies at 248-252 (KLSKR). Residue lysine 251 coordinates ATP.

Belongs to the class-I aminoacyl-tRNA synthetase family. Glutamate--tRNA ligase type 1 subfamily. Monomer.

It is found in the cytoplasm. The catalysed reaction is tRNA(Glu) + L-glutamate + ATP = L-glutamyl-tRNA(Glu) + AMP + diphosphate. In terms of biological role, catalyzes the attachment of glutamate to tRNA(Glu) in a two-step reaction: glutamate is first activated by ATP to form Glu-AMP and then transferred to the acceptor end of tRNA(Glu). In Prochlorococcus marinus (strain MIT 9215), this protein is Glutamate--tRNA ligase.